Reading from the N-terminus, the 95-residue chain is Protein TusB (95 aa).

It belongs to the DsrH/TusB family. As to quaternary structure, heterohexamer, formed by a dimer of trimers. The hexameric TusBCD complex contains 2 copies each of TusB, TusC and TusD. The TusBCD complex interacts with TusE.

It is found in the cytoplasm. Functionally, part of a sulfur-relay system required for 2-thiolation of 5-methylaminomethyl-2-thiouridine (mnm(5)s(2)U) at tRNA wobble positions. The sequence is that of Protein TusB from Buchnera aphidicola subsp. Acyrthosiphon pisum (strain 5A).